An 87-amino-acid chain; its full sequence is Insulin-related peptide 1 (87 aa).

An N-terminal signal peptide occupies residues 1–19; the sequence is MKSFMVFVLIFACFSCYYA. The propeptide occupies 20 to 44; sequence QESTNFYCGRTLSRALAVLCYGAES. The residue at position 64 (Arg-64) is an Arginine amide. Residues 68–87 constitute a propeptide that is removed on maturation; it reads GPVDECCEKACSIQELMTYC.

The protein belongs to the insulin family. DAGWWIPQHGHHALAGVR-amide: Expressed in corpora cardiaca (CC), corpora allata (CA), antennal lobe (AL) and gnathal ganglion (GNG) (at protein level). Expression in CC and CA detected in most animals, in AL and GNG in few animals (at protein level).

The protein resides in the secreted. The protein is Insulin-related peptide 1 of Agrotis ipsilon (Black cutworm moth).